Here is a 196-residue protein sequence, read N- to C-terminus: MSSKEQKTPEGQAPEEIIMDQHEEIEAVEPEASAEQVDPRDEKIANLEAQLAEAQTRERDGILRVKAEMENLRRRTELDIEKAHKFALEKFINELLPVIDSLDRALEVADKANPDMSAMVEGIELTLKSMLDVVRKFGVEVIAETNVPLDPNVHQAIAMVESDDVAPGNVLGIMQKGYTLNGRTIRAAMVTVAKAK.

The segment at 1 to 39 (MSSKEQKTPEGQAPEEIIMDQHEEIEAVEPEASAEQVDP) is disordered.

This sequence belongs to the GrpE family. As to quaternary structure, homodimer.

It localises to the cytoplasm. Functionally, participates actively in the response to hyperosmotic and heat shock by preventing the aggregation of stress-denatured proteins, in association with DnaK and GrpE. It is the nucleotide exchange factor for DnaK and may function as a thermosensor. Unfolded proteins bind initially to DnaJ; upon interaction with the DnaJ-bound protein, DnaK hydrolyzes its bound ATP, resulting in the formation of a stable complex. GrpE releases ADP from DnaK; ATP binding to DnaK triggers the release of the substrate protein, thus completing the reaction cycle. Several rounds of ATP-dependent interactions between DnaJ, DnaK and GrpE are required for fully efficient folding. In Escherichia coli O139:H28 (strain E24377A / ETEC), this protein is Protein GrpE.